Reading from the N-terminus, the 234-residue chain is C2H2-type zinc-finger transcription factor clz7 (234 aa).

Disordered regions lie at residues 45 to 99 (RPEG…SRVD) and 118 to 154 (SAQP…NGTA). Low complexity-rich tracts occupy residues 66–77 (SQSSNTSPTSES) and 140–154 (SSGT…NGTA). The segment at 159-184 (NRCWDHGCNGKKFLNHSNLVRHRREN) adopts a C2H2-type 1; degenerate zinc-finger fold. The C2H2-type 2; degenerate zinc-finger motif lies at 191-223 (FICPMCGAYFSRSTARNQHLEKKSCNRVRRYSN).

The protein belongs to the GLI C2H2-type zinc-finger protein family.

It is found in the nucleus. Functionally, transcription factor that probably regulates the expression of the gene cluster that mediates the biosynthesis of squalestatin S1 (SQS1, also known as zaragozic acid A), a heavily oxidized fungal polyketide that offers potent cholesterol lowering activity by targeting squalene synthase (SS). The chain is C2H2-type zinc-finger transcription factor clz7 from Cochliobolus lunatus (Filamentous fungus).